Here is a 154-residue protein sequence, read N- to C-terminus: tRNA-splicing endonuclease (154 aa).

Catalysis depends on residues Tyr-86, His-102, and Lys-133.

This sequence belongs to the tRNA-intron endonuclease family. Archaeal short subfamily. As to quaternary structure, homotetramer; although the tetramer contains four active sites, only two participate in the cleavage. Therefore, it should be considered as a dimer of dimers.

It carries out the reaction pretRNA = a 3'-half-tRNA molecule with a 5'-OH end + a 5'-half-tRNA molecule with a 2',3'-cyclic phosphate end + an intron with a 2',3'-cyclic phosphate and a 5'-hydroxyl terminus.. In terms of biological role, endonuclease that removes tRNA introns. Cleaves pre-tRNA at the 5'- and 3'-splice sites to release the intron. The products are an intron and two tRNA half-molecules bearing 2',3' cyclic phosphate and 5'-OH termini. Recognizes a pseudosymmetric substrate in which 2 bulged loops of 3 bases are separated by a stem of 4 bp. This is tRNA-splicing endonuclease from Nanoarchaeum equitans (strain Kin4-M).